A 545-amino-acid chain; its full sequence is Dual specificity calcium/calmodulin-dependent 3',5'-cyclic nucleotide phosphodiesterase 1A (545 aa).

2 calmodulin-binding regions span residues threonine 24–lysine 44 and glutamate 114–lysine 137. The PDEase domain occupies valine 142–glycine 522. Histidine 219 acts as the Proton donor in catalysis. 4 residues coordinate Zn(2+): histidine 223, histidine 259, aspartate 260, and aspartate 366. Aspartate 260 contacts Mg(2+). The segment at leucine 526–proline 545 is disordered.

This sequence belongs to the cyclic nucleotide phosphodiesterase family. PDE1 subfamily. As to quaternary structure, homodimer. Interacts with YWHAZ. Requires Zn(2+) as cofactor. The cofactor is Mg(2+). As to expression, expressed in brain, kidney and testis.

It is found in the cell projection. The protein resides in the cilium. Its subcellular location is the flagellum. It catalyses the reaction a nucleoside 3',5'-cyclic phosphate + H2O = a nucleoside 5'-phosphate + H(+). The enzyme catalyses 3',5'-cyclic GMP + H2O = GMP + H(+). The catalysed reaction is 3',5'-cyclic AMP + H2O = AMP + H(+). With respect to regulation, type I PDE are activated by the binding of calmodulin in the presence of Ca(2+). Activated by the binding of calmodulin in the presence of Ca(2+). Calcium/calmodulin-dependent cyclic nucleotide phosphodiesterase with a dual specificity for the second messengers cGMP and cAMP, which are key regulators of many important physiological processes. Has a higher efficiency with cGMP compared to cAMP. The protein is Dual specificity calcium/calmodulin-dependent 3',5'-cyclic nucleotide phosphodiesterase 1A of Mus musculus (Mouse).